Consider the following 167-residue polypeptide: CKLF-like MARVEL transmembrane domain-containing protein 7 (167 aa).

The region spanning Y32–C158 is the MARVEL domain. 4 consecutive transmembrane segments (helical) span residues T35–V55, F69–F89, L102–I122, and L132–L152.

Belongs to the chemokine-like factor family.

The protein resides in the membrane. In Mus musculus (Mouse), this protein is CKLF-like MARVEL transmembrane domain-containing protein 7 (Cmtm7).